A 322-amino-acid polypeptide reads, in one-letter code: N-acetyl-gamma-glutamyl-phosphate reductase (322 aa).

Cys-132 is a catalytic residue.

The protein belongs to the NAGSA dehydrogenase family. Type 1 subfamily.

The protein localises to the cytoplasm. It carries out the reaction N-acetyl-L-glutamate 5-semialdehyde + phosphate + NADP(+) = N-acetyl-L-glutamyl 5-phosphate + NADPH + H(+). It functions in the pathway amino-acid biosynthesis; L-arginine biosynthesis; N(2)-acetyl-L-ornithine from L-glutamate: step 3/4. Catalyzes the NADPH-dependent reduction of N-acetyl-5-glutamyl phosphate to yield N-acetyl-L-glutamate 5-semialdehyde. This chain is N-acetyl-gamma-glutamyl-phosphate reductase, found in Bacteroides thetaiotaomicron (strain ATCC 29148 / DSM 2079 / JCM 5827 / CCUG 10774 / NCTC 10582 / VPI-5482 / E50).